A 420-amino-acid chain; its full sequence is Proteinase-activated receptor 1 (420 aa).

Positions 1–20 are cleaved as a signal peptide; the sequence is MMELRVLLLLLLLTLLGAMG. The propeptide at 21–42 is removed for receptor activation; that stretch reads SLCLANSDTQAKGAHSNNMTIK. N-linked (GlcNAc...) asparagine glycosylation occurs at N38. The Extracellular segment spans residues 43 to 101; sequence TFRIFDDSESEFEEIPWDELDESGEGSGDQAPVSRSARKPIRRNITKEAEQYLSSQWLT. Residues 61–80 form a disordered region; it reads ELDESGEGSGDQAPVSRSAR. N86 carries an N-linked (GlcNAc...) asparagine glycan. Residues 102 to 127 form a helical membrane-spanning segment; the sequence is KFVPSLYTVVFIVGLPLNLLAIIIFL. Topologically, residues 128 to 136 are cytoplasmic; the sequence is FKMKVRKPA. The helical transmembrane segment at 137–156 threads the bilayer; it reads VVYMLNLAIADVFFVSVLPF. Residues 157 to 175 are Extracellular-facing; it reads KIAYHLSGNDWLFGPGMCR. C174 and C253 form a disulfide bridge. The helical transmembrane segment at 176–197 threads the bilayer; that stretch reads IVTAIFYCNMYCSVLLIASISV. At 198–217 the chain is on the cytoplasmic side; the sequence is DRFLAVVYPMHSLSWRTMSR. A helical transmembrane segment spans residues 218–238; the sequence is AYMACSFIWLISIASTIPLLV. The Extracellular portion of the chain corresponds to 239–267; that stretch reads TEQTQKIPRLDITTCHDVLDLKDLKDFYI. The helical transmembrane segment at 268 to 287 threads the bilayer; that stretch reads YYFSSFCLLFFFVPFIITTI. At 288-310 the chain is on the cytoplasmic side; it reads CYIGIIRSLSSSSIENSCKKTRA. A helical membrane pass occupies residues 311-333; it reads LFLAVVVLCVFIICFGPTNVLFL. Residues 334-345 are Extracellular-facing; that stretch reads THYLQEANEFLY. A helical membrane pass occupies residues 346–369; sequence FAYILSACVGSVSCCLDPLIYYYA. The Cytoplasmic portion of the chain corresponds to 370-420; the sequence is SSQCQRYLYSLLCCRKVSEPGSSTGQLMSTAMKNDNCSTNAKSSIYKKLLA.

It belongs to the G-protein coupled receptor 1 family. In terms of processing, proteolytic cleavage generates a new N-terminus that functions as a tethered ligand.

The protein localises to the cell membrane. High affinity receptor that binds the activated thrombin, leading to calcium release from intracellular stores. The thrombin-activated receptor signaling pathway is mediated through PTX-insensitive G proteins, activation of phospholipase C resulting in the production of 1D-myo-inositol 1,4,5-trisphosphate (InsP3) which binds to InsP3 receptors causing calcium release from the stores. The polypeptide is Proteinase-activated receptor 1 (Xenopus laevis (African clawed frog)).